Consider the following 567-residue polypeptide: Proline--tRNA ligase (567 aa).

The protein belongs to the class-II aminoacyl-tRNA synthetase family. ProS type 1 subfamily. In terms of assembly, homodimer.

It is found in the cytoplasm. It catalyses the reaction tRNA(Pro) + L-proline + ATP = L-prolyl-tRNA(Pro) + AMP + diphosphate. Its function is as follows. Catalyzes the attachment of proline to tRNA(Pro) in a two-step reaction: proline is first activated by ATP to form Pro-AMP and then transferred to the acceptor end of tRNA(Pro). As ProRS can inadvertently accommodate and process non-cognate amino acids such as alanine and cysteine, to avoid such errors it has two additional distinct editing activities against alanine. One activity is designated as 'pretransfer' editing and involves the tRNA(Pro)-independent hydrolysis of activated Ala-AMP. The other activity is designated 'posttransfer' editing and involves deacylation of mischarged Ala-tRNA(Pro). The misacylated Cys-tRNA(Pro) is not edited by ProRS. This chain is Proline--tRNA ligase, found in Streptomyces griseus subsp. griseus (strain JCM 4626 / CBS 651.72 / NBRC 13350 / KCC S-0626 / ISP 5235).